Reading from the N-terminus, the 739-residue chain is Catalase-peroxidase 2 (739 aa).

A signal peptide spans 1-26 (MKKTTIPTLSALTLAMSLAFGGAAIA). The segment at residues 105-227 (WHSAGVYRIF…MGATQMGLIY (123 aa)) is a cross-link (tryptophyl-tyrosyl-methioninium (Trp-Tyr) (with M-253)). The active-site Proton acceptor is the histidine 106. A cross-link (tryptophyl-tyrosyl-methioninium (Tyr-Met) (with W-105)) is located at residues 227-253 (YVNPEGPNGVPDPLASAKEIRDTFGRM). Histidine 268 contributes to the heme b binding site.

This sequence belongs to the peroxidase family. Peroxidase/catalase subfamily. In terms of assembly, homodimer or homotetramer. Heme b serves as cofactor. Post-translationally, formation of the three residue Trp-Tyr-Met cross-link is important for the catalase, but not the peroxidase activity of the enzyme.

The enzyme catalyses H2O2 + AH2 = A + 2 H2O. The catalysed reaction is 2 H2O2 = O2 + 2 H2O. In terms of biological role, bifunctional enzyme with both catalase and broad-spectrum peroxidase activity. In Shewanella sp. (strain MR-4), this protein is Catalase-peroxidase 2.